The chain runs to 249 residues: Triosephosphate isomerase (249 aa).

A substrate-binding site is contributed by 8-10 (NWK). H95 acts as the Electrophile in catalysis. E163 serves as the catalytic Proton acceptor. Residues G169 and S209 each contribute to the substrate site.

It belongs to the triosephosphate isomerase family. Homodimer.

The protein resides in the cytoplasm. The catalysed reaction is D-glyceraldehyde 3-phosphate = dihydroxyacetone phosphate. It participates in carbohydrate biosynthesis; gluconeogenesis. The protein operates within carbohydrate degradation; glycolysis; D-glyceraldehyde 3-phosphate from glycerone phosphate: step 1/1. Functionally, involved in the gluconeogenesis. Catalyzes stereospecifically the conversion of dihydroxyacetone phosphate (DHAP) to D-glyceraldehyde-3-phosphate (G3P). This Orientia tsutsugamushi (strain Ikeda) (Rickettsia tsutsugamushi) protein is Triosephosphate isomerase.